A 242-amino-acid polypeptide reads, in one-letter code: ATP synthase subunit a (242 aa).

6 helical membrane-spanning segments follow: residues 29 to 49 (SAVA…IAFV), 83 to 103 (VFFP…IIGM), 114 to 134 (IIVT…YGIY), 140 to 160 (FFSL…MVII), 181 to 201 (VAGH…TWFF), and 206 to 226 (IALV…QAYI).

This sequence belongs to the ATPase A chain family. F-type ATPases have 2 components, CF(1) - the catalytic core - and CF(0) - the membrane proton channel. CF(1) has five subunits: alpha(3), beta(3), gamma(1), delta(1), epsilon(1). CF(0) has three main subunits: a(1), b(2) and c(9-12). The alpha and beta chains form an alternating ring which encloses part of the gamma chain. CF(1) is attached to CF(0) by a central stalk formed by the gamma and epsilon chains, while a peripheral stalk is formed by the delta and b chains.

The protein localises to the cell inner membrane. Functionally, key component of the proton channel; it plays a direct role in the translocation of protons across the membrane. This Orientia tsutsugamushi (strain Boryong) (Rickettsia tsutsugamushi) protein is ATP synthase subunit a.